Here is a 138-residue protein sequence, read N- to C-terminus: Sporulation-specific cell division protein SsgB (138 aa).

It belongs to the SsgA family. As to quaternary structure, monomer. Interacts with SsgA. Interacts with FtsZ (via N-terminus).

The protein localises to the cell septum. Functionally, involved in sporulation-specific cell division. Required for early stages of sporulation. Important in the process of growth cessation prior to sporulation-specific cell division. Recruits cell division protein FtsZ to the future septum sites and tethers the contractile ring structure (Z ring) to the cytoplasmic membrane during sporulation. Stimulates polymerization and filament length of FtsZ in vitro. The chain is Sporulation-specific cell division protein SsgB from Thermobifida fusca (strain YX).